The following is a 717-amino-acid chain: SAGA factor-like TAF6 (717 aa).

The tract at residues 123–204 (KSYAGFDPRS…VPPMLGAMDS (82 aa)) is sufficient for interaction with Taf9.

The protein belongs to the TAF6 family. As to quaternary structure, component of the Spt-Ada-Gcn5 acetyltransferase (SAGA) complex consisting of wda/Taf5L, Saf6, Taf9, Taf10b, Taf12, Ada1, Spt3, Spt7, Spt20, Sf3b3, Sf3b5, Nipped-A/Tra1, a histone acetyltransferase (HAT) module made up of Gcn5, Ada2b (Isoform B), Ada3 and Sgf29, and a deubiquitinase (DUB) module made up of not/nonstop, Sgf11 and e(y)2 tethered to SAGA by Atxn7; not essential for SAGA complex assembly, histone-modifying activity or chromosomal recruitment. Interacts (via N-terminal histone-fold domain) with Taf9 (via N-terminal histone-fold domain); the interaction is probably direct. Probably forms a histone-like heterooctamer structure with Taf9, Taf12 and Taf10b.

The protein localises to the nucleus. Its subcellular location is the chromosome. Its function is as follows. Component of the transcription regulatory complex SAGA, a multiprotein complex that activates transcription by remodeling chromatin and mediating histone acetylation and deubiquitination. The SAGA complex predominantly acetylates histone H3. Involved in SAGA complex coactivator function but not essential for SAGA complex assembly, histone-modifying activity or chromosomal recruitment. Required for oogenesis; involved in transcriptional activation. The chain is SAGA factor-like TAF6 from Drosophila melanogaster (Fruit fly).